The primary structure comprises 224 residues: MAARLLWAVRRRMQPLAAHAASEGRGWLHPFSTATQRTAGEDCNSEDPPDELGPSLAERALKLKAVKLEKEVQDLTVRYQRAVADSENIRRRTQRCVEDAKIFGIQSFCKDLVEVADILEKTTECISEETEPADQKLTLEKIFRGLSLLEAKLKSVFAKHGLEKMTPIGDKYDPHEHELICHVPAGVGVQPGTVAFVRQDGYKLHGRTIRLAQVEVAVESQRRL.

The transit peptide at 1–31 (MAARLLWAVRRRMQPLAAHAASEGRGWLHPF) directs the protein to the mitochondrion. Lys-141 is modified (N6-acetyllysine).

The protein belongs to the GrpE family. As to quaternary structure, probable component of the PAM complex at least composed of a mitochondrial HSP70 protein, GRPEL1 or GRPEL2, TIMM44, TIMM16/PAM16 and TIMM14/DNAJC19.

Its subcellular location is the mitochondrion matrix. Functionally, essential component of the PAM complex, a complex required for the translocation of transit peptide-containing proteins from the inner membrane into the mitochondrial matrix in an ATP-dependent manner. Seems to control the nucleotide-dependent binding of mitochondrial HSP70 to substrate proteins. Stimulates ATPase activity of mt-HSP70. May also serve to modulate the interconversion of oligomeric (inactive) and monomeric (active) forms of mt-HSP70. The sequence is that of GrpE protein homolog 2, mitochondrial (GRPEL2) from Bos taurus (Bovine).